We begin with the raw amino-acid sequence, 516 residues long: Acetylcholine receptor subunit delta (516 aa).

Positions methionine 1 to glycine 21 are cleaved as a signal peptide. The Extracellular segment spans residues leucine 22–lysine 244. Residues asparagine 96 and asparagine 163 are each glycosylated (N-linked (GlcNAc...) asparagine). A disulfide bond links cysteine 150 and cysteine 164. A run of 3 helical transmembrane segments spans residues proline 245–leucine 269, methionine 279–lysine 296, and phenylalanine 311–isoleucine 332. At histidine 333 to arginine 470 the chain is on the cytoplasmic side. The residue at position 389 (tyrosine 389) is a Phosphotyrosine; by Tyr-kinases. The helical transmembrane segment at leucine 471–tyrosine 493 threads the bilayer.

This sequence belongs to the ligand-gated ion channel (TC 1.A.9) family. Acetylcholine receptor (TC 1.A.9.1) subfamily. Delta/CHRND sub-subfamily. As to quaternary structure, pentamer of two alpha chains, and one each of the beta, delta, and gamma (in immature muscle) or epsilon (in mature muscle) chains. The muscle heteropentamer composed of alpha-1, beta-1, delta, epsilon subunits interacts with the alpha-conotoxin ImII.

The protein localises to the postsynaptic cell membrane. It is found in the cell membrane. The enzyme catalyses K(+)(in) = K(+)(out). The catalysed reaction is Na(+)(in) = Na(+)(out). After binding acetylcholine, the AChR responds by an extensive change in conformation that affects all subunits and leads to opening of an ion-conducting channel across the plasma membrane. The chain is Acetylcholine receptor subunit delta (CHRND) from Bos taurus (Bovine).